Reading from the N-terminus, the 299-residue chain is Beta-lactamase VEB-1 (299 aa).

An N-terminal signal peptide occupies residues 1 to 23 (MKIVKRILLVLLSLFFTIVYSNA). S68 functions as the Nucleophile; acyl-ester intermediate in the catalytic mechanism. The a beta-lactam site is built by K71, S131, and E167. E167 serves as the catalytic Proton acceptor.

This sequence belongs to the class-A beta-lactamase family.

It catalyses the reaction a beta-lactam + H2O = a substituted beta-amino acid. Inhibited by the beta-lactamase-blocking agent clavulanic acid. Functionally, class A beta-lactamase which confers resistance to the beta-lactam antibiotics, including penicillins and cephalosporins, in E.coli strain JM109. Acts via hydrolysis of the beta-lactam ring. Has penicillin-, and cephalosporin-hydrolyzing activities. The polypeptide is Beta-lactamase VEB-1 (Pseudomonas aeruginosa).